The following is a 245-amino-acid chain: 1-(5-phosphoribosyl)-5-[(5-phosphoribosylamino)methylideneamino] imidazole-4-carboxamide isomerase (245 aa).

D7 (proton acceptor) is an active-site residue. The active-site Proton donor is D129.

It belongs to the HisA/HisF family.

The protein resides in the cytoplasm. The enzyme catalyses 1-(5-phospho-beta-D-ribosyl)-5-[(5-phospho-beta-D-ribosylamino)methylideneamino]imidazole-4-carboxamide = 5-[(5-phospho-1-deoxy-D-ribulos-1-ylimino)methylamino]-1-(5-phospho-beta-D-ribosyl)imidazole-4-carboxamide. Its pathway is amino-acid biosynthesis; L-histidine biosynthesis; L-histidine from 5-phospho-alpha-D-ribose 1-diphosphate: step 4/9. The polypeptide is 1-(5-phosphoribosyl)-5-[(5-phosphoribosylamino)methylideneamino] imidazole-4-carboxamide isomerase (Escherichia coli O17:K52:H18 (strain UMN026 / ExPEC)).